The primary structure comprises 422 residues: Tk-subtilisin (422 aa).

A signal peptide spans 1 to 24 (MKKSIALVLSIVLLAALFAVPASA). Positions 25 to 106 (GEQNTIRVIV…SWLGGGSTQP (82 aa)) are excised as a propeptide. Residues 111–417 (PWGIERVKAP…YGVVRAALAV (307 aa)) enclose the Peptidase S8 domain. Active-site charge relay system residues include D139, H177, and S348.

It belongs to the peptidase S8 family. In terms of assembly, monomer. Ca(2+) is required as a cofactor.

The protein localises to the secreted. Its function is as follows. Has a broad substrate specificity with a slight preference to large hydrophobic amino acid residues at the P1 position. In Thermococcus kodakarensis (strain ATCC BAA-918 / JCM 12380 / KOD1) (Pyrococcus kodakaraensis (strain KOD1)), this protein is Tk-subtilisin.